The following is a 53-amino-acid chain: Collagen alpha-1(I) chain (53 aa).

The segment at 1-53 is disordered; that stretch reads SYGYBZKSAGVSVPGPMGPSGPRGLPGPPGAPGPZGFZGPPGZPGZPGSSGPM. The residue at position 7 (K7) is an Allysine. Position 8 is a phosphoserine (S8). Positions 10 to 23 are enriched in low complexity; sequence GVSVPGPMGPSGPR. P26, P29, P32, P41, P44, and P47 each carry 4-hydroxyproline. Residues 34–53 are compositionally biased toward low complexity; the sequence is PZGFZGPPGZPGZPGSSGPM.

Belongs to the fibrillar collagen family. In terms of assembly, trimers of one alpha 2(I) and two alpha 1(I) chains. Interacts with MRC2. Interacts with TRAM2. Interacts with MFAP4 in a Ca (2+)-dependent manner. In terms of processing, contains mostly 4-hydroxyproline. Proline residues at the third position of the tripeptide repeating unit (G-X-Y) are hydroxylated in some or all of the chains. Post-translationally, contains 3-hydroxyproline at a few sites. This modification occurs on the first proline residue in the sequence motif Gly-Pro-Hyp, where Hyp is 4-hydroxyproline. Lysine residues at the third position of the tripeptide repeating unit (G-X-Y) are 5-hydroxylated in some or all of the chains. In terms of processing, O-glycosylated on hydroxylated lysine residues. The O-linked glycan consists of a Glc-Gal disaccharide. Forms the fibrils of tendon, ligaments and bones. In bones the fibrils are mineralized with calcium hydroxyapatite.

It localises to the secreted. Its subcellular location is the extracellular space. The protein localises to the extracellular matrix. Type I collagen is a member of group I collagen (fibrillar forming collagen). The chain is Collagen alpha-1(I) chain (COL1A1) from Oryctolagus cuniculus (Rabbit).